A 354-amino-acid polypeptide reads, in one-letter code: Ferrochelatase (354 aa).

Residues histidine 214 and glutamate 295 each contribute to the Fe cation site.

Belongs to the ferrochelatase family.

It is found in the cytoplasm. The enzyme catalyses heme b + 2 H(+) = protoporphyrin IX + Fe(2+). It participates in porphyrin-containing compound metabolism; protoheme biosynthesis; protoheme from protoporphyrin-IX: step 1/1. Its function is as follows. Catalyzes the ferrous insertion into protoporphyrin IX. The sequence is that of Ferrochelatase from Burkholderia vietnamiensis (strain G4 / LMG 22486) (Burkholderia cepacia (strain R1808)).